The primary structure comprises 106 residues: Protein translocase subunit SecE (106 aa).

Transmembrane regions (helical) follow at residues 20–40 (LPIRVIGMAIALVIAFILAAI) and 75–95 (IVIGVTMIASLFFWAVDSIIV).

The protein belongs to the SecE/SEC61-gamma family. Component of the Sec protein translocase complex. Heterotrimer consisting of SecY, SecE and SecG subunits. The heterotrimers can form oligomers, although 1 heterotrimer is thought to be able to translocate proteins. Interacts with the ribosome. Interacts with SecDF, and other proteins may be involved. Interacts with SecA.

It localises to the cell inner membrane. Functionally, essential subunit of the Sec protein translocation channel SecYEG. Clamps together the 2 halves of SecY. May contact the channel plug during translocation. The sequence is that of Protein translocase subunit SecE from Haemophilus influenzae (strain ATCC 51907 / DSM 11121 / KW20 / Rd).